The primary structure comprises 509 residues: MLKDFREARIKEIDELRNLGINPYPYSYNKTHTTEDIKKQFEHLSNGEVTDKRVSTAGRIMSIREHGKSAFFHIKDTYGRIQAYIRKDKTENYEFFKERVTVGDIVGVEGIVFKSNTGEITILVEKFELLVKPLRPMPEKWHGIKDKEVLYRQRYVDMIANDETIKRFRMRSDIIRMIREFLTKKGFFEVETPILQYLTGGASARPFITHLNALDIDMYLRIATELHLKRFIVGGFDKVYEIGKIFRNEGISYKHHPEFTSIELYQAYADYEDMMNLTEELITYLVEQLYGTTKITYQGQEIDFTRPWRRVKMRDFIKENLGVDIIEDSDETMAKVLAENGVEVDINDRGHMIEKLWDLVEDKVIQPTFLLEHPVEISPLAKKHREDPRVTERFELIIYGREMANAFSELNDPVDQLERFMNQLRLRDLGDQEAQMLDKDFVRALEYGMPPTGGLGIGIDRLVMLLTDSANIRDVIAFPLVRPEGDIDIEDYTDLEKSEIIEKEGGNKA.

Mg(2+)-binding residues include E395 and E402.

The protein belongs to the class-II aminoacyl-tRNA synthetase family. As to quaternary structure, homodimer. The cofactor is Mg(2+).

The protein resides in the cytoplasm. The catalysed reaction is tRNA(Lys) + L-lysine + ATP = L-lysyl-tRNA(Lys) + AMP + diphosphate. In Fervidobacterium nodosum (strain ATCC 35602 / DSM 5306 / Rt17-B1), this protein is Lysine--tRNA ligase.